The primary structure comprises 362 residues: UDP-N-acetylglucosamine--N-acetylmuramyl-(pentapeptide) pyrophosphoryl-undecaprenol N-acetylglucosamine transferase (362 aa).

UDP-N-acetyl-alpha-D-glucosamine contacts are provided by residues 11–13, N124, R163, S191, I246, and Q291; that span reads TGG.

Belongs to the glycosyltransferase 28 family. MurG subfamily.

It is found in the cell inner membrane. The catalysed reaction is di-trans,octa-cis-undecaprenyl diphospho-N-acetyl-alpha-D-muramoyl-L-alanyl-D-glutamyl-meso-2,6-diaminopimeloyl-D-alanyl-D-alanine + UDP-N-acetyl-alpha-D-glucosamine = di-trans,octa-cis-undecaprenyl diphospho-[N-acetyl-alpha-D-glucosaminyl-(1-&gt;4)]-N-acetyl-alpha-D-muramoyl-L-alanyl-D-glutamyl-meso-2,6-diaminopimeloyl-D-alanyl-D-alanine + UDP + H(+). It participates in cell wall biogenesis; peptidoglycan biosynthesis. Cell wall formation. Catalyzes the transfer of a GlcNAc subunit on undecaprenyl-pyrophosphoryl-MurNAc-pentapeptide (lipid intermediate I) to form undecaprenyl-pyrophosphoryl-MurNAc-(pentapeptide)GlcNAc (lipid intermediate II). The sequence is that of UDP-N-acetylglucosamine--N-acetylmuramyl-(pentapeptide) pyrophosphoryl-undecaprenol N-acetylglucosamine transferase from Idiomarina loihiensis (strain ATCC BAA-735 / DSM 15497 / L2-TR).